A 143-amino-acid polypeptide reads, in one-letter code: Transcriptional regulator MraZ (143 aa).

2 SpoVT-AbrB domains span residues 5 to 47 (EYQH…PQDE) and 76 to 119 (AAEL…STEK).

The protein belongs to the MraZ family. Forms oligomers.

Its subcellular location is the cytoplasm. It localises to the nucleoid. The sequence is that of Transcriptional regulator MraZ from Syntrophomonas wolfei subsp. wolfei (strain DSM 2245B / Goettingen).